Consider the following 907-residue polypeptide: MDTSRVRMLLSLLALLQLVAAGSPPRPDTMPRGCPSYCHCELDGRMLLRVDCSDLGLSELPSNLSVFTSYLDLSMNNISQLPASLLHRLRFLEELRLAGNALTHIPKGAFAGLHSLKVLMLQNNQLRQVPEEALQNLRSLQSLRLDANHISYVPPSCFSGLHSLRHLWLDDNALTDVPVQAFRSLSALQAMTLALNKIHHIADHAFGNLSSLVVLHLHNNRIHSLGKKCFDGLHSLETLDLNYNNLDEFPTAIKTLSNLKELGFHSNNIRSIPERAFVGNPSLITIHFYDNPIQFVGISAFQHLPELRTLTLNGASQITEFPDLTGTATLESLTLTGAKISSLPQTVCDQLPNLQVLDLSYNLLEDLPSLSGCQKLQKIDLRHNEIYEIKGGTFQQLFNLRSLNLARNKIAIIHPNAFSTLPSLIKLDLSSNLLSSFPVTGLHGLTHLKLTGNRALQSLIPSANFPELKIIEMPYAYQCCAFGGCENVYKIPNQWNKDDSSSVDDLRKKDAGLFQVQDERDLEDFLLDFEEDLKVLHSVQCSPPPGPFKPCEHLFGSWLIRIGVWTTAVLALSCNALVAFTVFRTPLYISSIKLLIGVIAVVDILMGVSSAILAVVDTFTFGSFAQHGAWWEGGIGCQIVGFLSIFASESSVFLLTLAALERGFSVKCSSKFEMKAPLSSLKAIILLCVLLALTIATVPLLGGSEYNASPLCLPLPFGEPSTTGYMVALVLLNSLCFLIMTIAYTRLYCSLEKGELENLWDCSMVKHTALLLFTNCILYCPVAFLSFSSLLNLTFISPEVIKFILLVIVPLPACLNPLLYIVFNPHFKEDMGSLGKQTRFWTRAKHPSLLSINSDDVEKRSCDSTQALVSFTHASIAYDLPSDSGSSPAYPMTESCHLSSVAFVPCL.

An N-terminal signal peptide occupies residues 1–21 (MDTSRVRMLLSLLALLQLVAA). Residues 22–561 (GSPPRPDTMP…EHLFGSWLIR (540 aa)) lie on the Extracellular side of the membrane. In terms of domain architecture, LRRNT spans 33–64 (GCPSYCHCELDGRMLLRVDCSDLGLSELPSNL). Cystine bridges form between Cys-34/Cys-40 and Cys-38/Cys-52. 17 LRR repeats span residues 44–64 (GRML…PSNL), 65–88 (SVFT…LLHR), 89–112 (LRFL…AFAG), 114–136 (HSLK…ALQN), 137–160 (LRSL…CFSG), 162–184 (HSLR…AFRS), 186–208 (SALQ…AFGN), 209–232 (LSSL…CFDG), 233–256 (LHSL…IKTL), 257–279 (SNLK…AFVG), 281–303 (PSLI…AFQH), 304–327 (LPEL…LTGT), 328–350 (ATLE…VCDQ), 351–375 (LPNL…GCQK), 377–396 (QKID…TFQQ), 397–420 (LFNL…AFST), and 422–444 (PSLI…GLHG). N-linked (GlcNAc...) asparagine glycans are attached at residues Asn-63 and Asn-77. Residue Asn-208 is glycosylated (N-linked (GlcNAc...) asparagine). The cysteines at positions 348 and 373 are disulfide-linked. A disulfide bridge links Cys-479 with Cys-541. A helical membrane pass occupies residues 562–582 (IGVWTTAVLALSCNALVAFTV). An LRR 18 repeat occupies 564–585 (VWTTAVLALSCNALVAFTVFRT). Topologically, residues 583 to 595 (FRTPLYISSIKLL) are cytoplasmic. Residues 596 to 616 (IGVIAVVDILMGVSSAILAVV) form a helical membrane-spanning segment. The Extracellular portion of the chain corresponds to 617 to 638 (DTFTFGSFAQHGAWWEGGIGCQ). An intrachain disulfide couples Cys-637 to Cys-712. A helical membrane pass occupies residues 639–659 (IVGFLSIFASESSVFLLTLAA). Over 660–682 (LERGFSVKCSSKFEMKAPLSSLK) the chain is Cytoplasmic. The helical transmembrane segment at 683 to 703 (AIILLCVLLALTIATVPLLGG) threads the bilayer. The Extracellular segment spans residues 704 to 723 (SEYNASPLCLPLPFGEPSTT). Residues 724-744 (GYMVALVLLNSLCFLIMTIAY) traverse the membrane as a helical segment. Residues 745-775 (TRLYCSLEKGELENLWDCSMVKHTALLLFTN) lie on the Cytoplasmic side of the membrane. A helical membrane pass occupies residues 776 to 796 (CILYCPVAFLSFSSLLNLTFI). The Extracellular portion of the chain corresponds to 797–802 (SPEVIK). Residues 803–823 (FILLVIVPLPACLNPLLYIVF) traverse the membrane as a helical segment. At 824-907 (NPHFKEDMGS…LSSVAFVPCL (84 aa)) the chain is on the cytoplasmic side.

The protein belongs to the G-protein coupled receptor 1 family. As to quaternary structure, identified in a complex composed of RNF43, LGR5 and RSPO1. Also interacts with other R-spondin ligands, including RSPO2, RSPO3 and RSPO4.

Its subcellular location is the cell membrane. The protein resides in the golgi apparatus. It localises to the trans-Golgi network membrane. Functionally, receptor for R-spondins that potentiates the canonical Wnt signaling pathway and acts as a stem cell marker of the intestinal epithelium and the hair follicle. Upon binding to R-spondins (RSPO1, RSPO2, RSPO3 or RSPO4), associates with phosphorylated LRP6 and frizzled receptors that are activated by extracellular Wnt receptors, triggering the canonical Wnt signaling pathway to increase expression of target genes. In contrast to classical G-protein coupled receptors, does not activate heterotrimeric G-proteins to transduce the signal. Involved in the development and/or maintenance of the adult intestinal stem cells during postembryonic development. In Rattus norvegicus (Rat), this protein is Leucine-rich repeat-containing G-protein coupled receptor 5 (Lgr5).